A 548-amino-acid chain; its full sequence is ATP synthase subunit alpha (548 aa).

172–179 (GDRKTGKT) is an ATP binding site. The disordered stretch occupies residues 526–548 (AEAMDEADVEKESVKVRKPAPKK).

This sequence belongs to the ATPase alpha/beta chains family. As to quaternary structure, F-type ATPases have 2 components, CF(1) - the catalytic core - and CF(0) - the membrane proton channel. CF(1) has five subunits: alpha(3), beta(3), gamma(1), delta(1), epsilon(1). CF(0) has three main subunits: a(1), b(2) and c(9-12). The alpha and beta chains form an alternating ring which encloses part of the gamma chain. CF(1) is attached to CF(0) by a central stalk formed by the gamma and epsilon chains, while a peripheral stalk is formed by the delta and b chains.

It localises to the cell membrane. The enzyme catalyses ATP + H2O + 4 H(+)(in) = ADP + phosphate + 5 H(+)(out). Its function is as follows. Produces ATP from ADP in the presence of a proton gradient across the membrane. The alpha chain is a regulatory subunit. This chain is ATP synthase subunit alpha, found in Mycolicibacterium vanbaalenii (strain DSM 7251 / JCM 13017 / BCRC 16820 / KCTC 9966 / NRRL B-24157 / PYR-1) (Mycobacterium vanbaalenii).